We begin with the raw amino-acid sequence, 194 residues long: Chitin synthase 2 (194 aa).

This sequence belongs to the chitin synthase family. Class III subfamily.

It is found in the cell membrane. It catalyses the reaction [(1-&gt;4)-N-acetyl-beta-D-glucosaminyl](n) + UDP-N-acetyl-alpha-D-glucosamine = [(1-&gt;4)-N-acetyl-beta-D-glucosaminyl](n+1) + UDP + H(+). Its function is as follows. Polymerizes chitin, a structural polymer of the cell wall and septum, by transferring the sugar moiety of UDP-GlcNAc to the non-reducing end of the growing chitin polymer. The sequence is that of Chitin synthase 2 (CHS2) from Ajellomyces capsulatus (Darling's disease fungus).